Here is a 419-residue protein sequence, read N- to C-terminus: Tyrosine--tRNA ligase (419 aa).

Tyr-34 contacts L-tyrosine. The 'HIGH' region signature appears at 39–48 (PTADSLHIGN). L-tyrosine contacts are provided by Tyr-169 and Gln-173. The 'KMSKS' region motif lies at 230 to 234 (KFGKT). Residue Lys-233 coordinates ATP. The S4 RNA-binding domain occupies 352–419 (VPLVELLVSA…KKKYYLIRYA (68 aa)).

The protein belongs to the class-I aminoacyl-tRNA synthetase family. TyrS type 1 subfamily. Homodimer.

Its subcellular location is the cytoplasm. It catalyses the reaction tRNA(Tyr) + L-tyrosine + ATP = L-tyrosyl-tRNA(Tyr) + AMP + diphosphate + H(+). In terms of biological role, catalyzes the attachment of tyrosine to tRNA(Tyr) in a two-step reaction: tyrosine is first activated by ATP to form Tyr-AMP and then transferred to the acceptor end of tRNA(Tyr). This chain is Tyrosine--tRNA ligase, found in Geobacillus kaustophilus (strain HTA426).